We begin with the raw amino-acid sequence, 466 residues long: Arginine biosynthesis bifunctional protein ArgJ, mitochondrial (466 aa).

Residues 1-9 constitute a mitochondrion transit peptide; the sequence is MSSLVLKRF. The substrate site is built by threonine 183, lysine 209, threonine 232, glutamate 320, asparagine 461, and serine 466. Catalysis depends on threonine 232, which acts as the Nucleophile.

This sequence belongs to the ArgJ family. As to quaternary structure, heterodimer of an alpha and a beta chain. The alpha and beta chains are autoproteolytically processed from a single precursor protein within the mitochondrion.

Its subcellular location is the mitochondrion matrix. The catalysed reaction is N(2)-acetyl-L-ornithine + L-glutamate = N-acetyl-L-glutamate + L-ornithine. The enzyme catalyses L-glutamate + acetyl-CoA = N-acetyl-L-glutamate + CoA + H(+). It functions in the pathway amino-acid biosynthesis; L-arginine biosynthesis; L-ornithine and N-acetyl-L-glutamate from L-glutamate and N(2)-acetyl-L-ornithine (cyclic): step 1/1. Its pathway is amino-acid biosynthesis; L-arginine biosynthesis; N(2)-acetyl-L-ornithine from L-glutamate: step 1/4. In terms of biological role, catalyzes two activities which are involved in the cyclic version of arginine biosynthesis: the synthesis of acetylglutamate from glutamate and acetyl-CoA, and of ornithine by transacetylation between acetylornithine and glutamate. This chain is Arginine biosynthesis bifunctional protein ArgJ, mitochondrial, found in Laccaria bicolor (strain S238N-H82 / ATCC MYA-4686) (Bicoloured deceiver).